Reading from the N-terminus, the 100-residue chain is Large ribosomal subunit protein uL23 (100 aa).

It belongs to the universal ribosomal protein uL23 family. Part of the 50S ribosomal subunit. Contacts protein L29, and trigger factor when it is bound to the ribosome.

In terms of biological role, one of the early assembly proteins it binds 23S rRNA. One of the proteins that surrounds the polypeptide exit tunnel on the outside of the ribosome. Forms the main docking site for trigger factor binding to the ribosome. This is Large ribosomal subunit protein uL23 from Shewanella halifaxensis (strain HAW-EB4).